We begin with the raw amino-acid sequence, 204 residues long: Large ribosomal subunit protein uL4 (204 aa).

The tract at residues 49–76 is disordered; the sequence is KTKGISDVSGTTAKPYGQKRTGRARQGS.

It belongs to the universal ribosomal protein uL4 family. Part of the 50S ribosomal subunit.

Its function is as follows. One of the primary rRNA binding proteins, this protein initially binds near the 5'-end of the 23S rRNA. It is important during the early stages of 50S assembly. It makes multiple contacts with different domains of the 23S rRNA in the assembled 50S subunit and ribosome. Functionally, forms part of the polypeptide exit tunnel. The sequence is that of Large ribosomal subunit protein uL4 from Wolbachia pipientis wMel.